A 242-amino-acid chain; its full sequence is Adenosylcobinamide-GDP ribazoletransferase (242 aa).

The next 5 membrane-spanning stretches (helical) occupy residues 31–51 (LLFY…LSTA), 52–72 (LMGA…VLLS), 109–129 (IAVV…VALI), 134–154 (GAAL…LFLT), and 188–208 (ILIG…CFIG).

The protein belongs to the CobS family. Requires Mg(2+) as cofactor.

Its subcellular location is the cell inner membrane. It carries out the reaction alpha-ribazole + adenosylcob(III)inamide-GDP = adenosylcob(III)alamin + GMP + H(+). The catalysed reaction is alpha-ribazole 5'-phosphate + adenosylcob(III)inamide-GDP = adenosylcob(III)alamin 5'-phosphate + GMP + H(+). The protein operates within cofactor biosynthesis; adenosylcobalamin biosynthesis; adenosylcobalamin from cob(II)yrinate a,c-diamide: step 7/7. In terms of biological role, joins adenosylcobinamide-GDP and alpha-ribazole to generate adenosylcobalamin (Ado-cobalamin). Also synthesizes adenosylcobalamin 5'-phosphate from adenosylcobinamide-GDP and alpha-ribazole 5'-phosphate. The polypeptide is Adenosylcobinamide-GDP ribazoletransferase (Pseudomonas fluorescens (strain SBW25)).